A 411-amino-acid polypeptide reads, in one-letter code: Argininosuccinate synthase (411 aa).

Residues 15-23 and A42 contribute to the ATP site; that span reads AYSGGLDTS. Positions 93 and 98 each coordinate L-citrulline. G123 contacts ATP. T125, N129, and D130 together coordinate L-aspartate. N129 provides a ligand contact to L-citrulline. 5 residues coordinate L-citrulline: R133, S185, S194, E270, and Y282.

Belongs to the argininosuccinate synthase family. Type 1 subfamily. In terms of assembly, homotetramer.

The protein resides in the cytoplasm. It catalyses the reaction L-citrulline + L-aspartate + ATP = 2-(N(omega)-L-arginino)succinate + AMP + diphosphate + H(+). It participates in amino-acid biosynthesis; L-arginine biosynthesis; L-arginine from L-ornithine and carbamoyl phosphate: step 2/3. This Psychrobacter sp. (strain PRwf-1) protein is Argininosuccinate synthase.